The primary structure comprises 322 residues: Acetyl-coenzyme A carboxylase carboxyl transferase subunit alpha (322 aa).

The region spanning 40–297 (PLQKKLGDLR…RETLTRNLEE (258 aa)) is the CoA carboxyltransferase C-terminal domain.

Belongs to the AccA family. As to quaternary structure, acetyl-CoA carboxylase is a heterohexamer composed of biotin carboxyl carrier protein (AccB), biotin carboxylase (AccC) and two subunits each of ACCase subunit alpha (AccA) and ACCase subunit beta (AccD).

It localises to the cytoplasm. It carries out the reaction N(6)-carboxybiotinyl-L-lysyl-[protein] + acetyl-CoA = N(6)-biotinyl-L-lysyl-[protein] + malonyl-CoA. It participates in lipid metabolism; malonyl-CoA biosynthesis; malonyl-CoA from acetyl-CoA: step 1/1. Component of the acetyl coenzyme A carboxylase (ACC) complex. First, biotin carboxylase catalyzes the carboxylation of biotin on its carrier protein (BCCP) and then the CO(2) group is transferred by the carboxyltransferase to acetyl-CoA to form malonyl-CoA. The sequence is that of Acetyl-coenzyme A carboxylase carboxyl transferase subunit alpha from Gemmatimonas aurantiaca (strain DSM 14586 / JCM 11422 / NBRC 100505 / T-27).